The sequence spans 52 residues: MEAVKEKNELFDLDVKVNAKESNDSGAEPRIASKFLCTPGCAKTGSFNSYCC.

Positions 1-30 are excised as a propeptide; it reads MEAVKEKNELFDLDVKVNAKESNDSGAEPR. Positions 33 to 37 form a cross-link, lanthionine (Ser-Cys); the sequence is SKFLC. Positions 38–41 form a cross-link, beta-methyllanthionine (Thr-Cys); it reads TPGC. At T44 the chain carries (Z)-2,3-didehydrobutyrine. Residues 46 to 51 constitute a cross-link (lanthionine (Ser-Cys)); it reads SFNSYC. The S-(2-aminovinyl)-D-cysteine (Ser-Cys) cross-link spans 49 to 52; that stretch reads SYCC.

This sequence belongs to the type A lantibiotic family. Post-translationally, maturation of lantibiotics involves the enzymatic conversion of Thr, and Ser into dehydrated AA and the formation of thioether bonds with cysteine. The C-terminal lanthionine undergoes decarboxylation. This is followed by membrane translocation and cleavage of the modified precursor. In terms of processing, the structure of the 2,3-didehydrobutyrine is not discussed in PubMed:1932575. However, in Fig. 5 the NMR model appears to have the Z-isomer.

Lanthionine-containing peptide antibiotic (lantibiotic) active on Gram-positive bacteria. The bactericidal activity of lantibiotics is based on depolarization of energized bacterial cytoplasmic membranes, initiated by the formation of aqueous transmembrane pores. This Staphylococcus gallinarum protein is Lantibiotic gallidermin (gdmA).